The sequence spans 284 residues: Formyltetrahydrofolate deformylase (284 aa).

The ACT domain maps to Thr7–Arg90. The active site involves Asp228.

Belongs to the PurU family.

The enzyme catalyses (6R)-10-formyltetrahydrofolate + H2O = (6S)-5,6,7,8-tetrahydrofolate + formate + H(+). The protein operates within purine metabolism; IMP biosynthesis via de novo pathway; formate from 10-formyl-5,6,7,8-tetrahydrofolate: step 1/1. Functionally, catalyzes the hydrolysis of 10-formyltetrahydrofolate (formyl-FH4) to formate and tetrahydrofolate (FH4). This Synechocystis sp. (strain ATCC 27184 / PCC 6803 / Kazusa) protein is Formyltetrahydrofolate deformylase.